The sequence spans 380 residues: Cytochrome b (380 aa).

The next 4 helical transmembrane spans lie at 34–54 (FGSLLGICLTTQILTGLLLAM), 78–99 (WLIRNLHANGASFFFICIYLHI), 114–134 (WNTGIILLLTLMATAFVGYVL), and 179–199 (FFALHFLLPFMIAGLTLIHLT). His84 and His98 together coordinate heme b. Heme b is bound by residues His183 and His197. Residue His202 coordinates a ubiquinone. 4 helical membrane passes run 227–247 (TKDTLGFALMLLPLTTLALFS), 289–309 (LGGVLALAASVLILFLIPLLH), 321–341 (LSQLLFWTLVANLTILTWIGS), and 348–368 (FIIIGQLASLTYFTILLILFP).

This sequence belongs to the cytochrome b family. In terms of assembly, the cytochrome bc1 complex contains 11 subunits: 3 respiratory subunits (MT-CYB, CYC1 and UQCRFS1), 2 core proteins (UQCRC1 and UQCRC2) and 6 low-molecular weight proteins (UQCRH/QCR6, UQCRB/QCR7, UQCRQ/QCR8, UQCR10/QCR9, UQCR11/QCR10 and a cleavage product of UQCRFS1). This cytochrome bc1 complex then forms a dimer. Heme b serves as cofactor.

Its subcellular location is the mitochondrion inner membrane. Its function is as follows. Component of the ubiquinol-cytochrome c reductase complex (complex III or cytochrome b-c1 complex) that is part of the mitochondrial respiratory chain. The b-c1 complex mediates electron transfer from ubiquinol to cytochrome c. Contributes to the generation of a proton gradient across the mitochondrial membrane that is then used for ATP synthesis. The polypeptide is Cytochrome b (MT-CYB) (Aptenodytes patagonicus (King penguin)).